The following is a 64-amino-acid chain: MPKMKTNKSVSARFKLTASGQLKRTRPGKRHKLSKKSSQEKRNLSKQPLVDKGQVGMYKRMMLV.

A disordered region spans residues 1 to 55; sequence MPKMKTNKSVSARFKLTASGQLKRTRPGKRHKLSKKSSQEKRNLSKQPLVDKGQV. The segment covering 23–35 has biased composition (basic residues); sequence KRTRPGKRHKLSK.

This sequence belongs to the bacterial ribosomal protein bL35 family.

This is Large ribosomal subunit protein bL35 from Chlamydia pneumoniae (Chlamydophila pneumoniae).